The sequence spans 295 residues: Probable endonuclease 4 (295 aa).

Residues H78, H118, E154, D188, H191, H225, D238, H240, and E270 each contribute to the Zn(2+) site.

It belongs to the AP endonuclease 2 family. Zn(2+) is required as a cofactor.

It catalyses the reaction Endonucleolytic cleavage to 5'-phosphooligonucleotide end-products.. Functionally, endonuclease IV plays a role in DNA repair. It cleaves phosphodiester bonds at apurinic or apyrimidinic (AP) sites, generating a 3'-hydroxyl group and a 5'-terminal sugar phosphate. This is Probable endonuclease 4 from Vibrio campbellii (strain ATCC BAA-1116).